The primary structure comprises 255 residues: MFSSSVSISILVVVAMQFSFIHNVLSLNQTNSYLQHICINSEGKYKAKNSYESRLKDHLDSMSNILDYGFIHGVGGADSSTYYIKAQCRGDASESKCRSCLFTAFSGILRRCPNNRGRIIWYDNCFLYISEIYTYEKIDFKHYLYLHNAKDVSGNKKLFNKNTKALLDKLKEKAIRKEQEPYTRDYMYAAGEESLGTTKLYGMMQCTQDLSVKNCSVCLDSIIAKLPRCCNGKQGGRVLNPSCTFRYELYPFVKP.

A signal peptide spans 1 to 26 (MFSSSVSISILVVVAMQFSFIHNVLS). Gnk2-homologous domains are found at residues 33 to 134 (YLQH…EIYT) and 140 to 252 (FKHY…LYPF).

This sequence belongs to the cysteine-rich repeat secretory protein family.

It is found in the secreted. This Arabidopsis thaliana (Mouse-ear cress) protein is Putative cysteine-rich repeat secretory protein 10 (CRRSP10).